We begin with the raw amino-acid sequence, 473 residues long: ATP synthase subunit beta (473 aa).

Residue 158 to 165 (GGAGVGKT) participates in ATP binding.

Belongs to the ATPase alpha/beta chains family. As to quaternary structure, F-type ATPases have 2 components, CF(1) - the catalytic core - and CF(0) - the membrane proton channel. CF(1) has five subunits: alpha(3), beta(3), gamma(1), delta(1), epsilon(1). CF(0) has three main subunits: a(1), b(2) and c(9-12). The alpha and beta chains form an alternating ring which encloses part of the gamma chain. CF(1) is attached to CF(0) by a central stalk formed by the gamma and epsilon chains, while a peripheral stalk is formed by the delta and b chains.

It is found in the cell membrane. It catalyses the reaction ATP + H2O + 4 H(+)(in) = ADP + phosphate + 5 H(+)(out). Its function is as follows. Produces ATP from ADP in the presence of a proton gradient across the membrane. The catalytic sites are hosted primarily by the beta subunits. The chain is ATP synthase subunit beta from Bacillus sp. (strain PS3).